The primary structure comprises 442 residues: MKLYALFSLLVGSLAIGQISAAGSHHLLCYYDGNSFVREGLSKLILTDLEPALQYCTHLVYGYAGINPSSNKLVSNNEKLDLDLGSSLFRQVTGLKRKYPALKVLLSVGGDKDTVDPENNKYLTLLESSNARIPFINSAHSLVKTYGFDGLDLGWQFPKNKPKKVHGSIGKFWKGFKKIFSGDHVVDEKAEEHKEAFTALVRELKNAFRPDGYILGLSVLPNVNSSLFFDVPAIINNLDYVNLHTYDFQTPERNNEVADFPAPIYELNERNPEFNVNYQVKYWTGNRAPAAKINVGIATYGRAWKLTKDSGLTGLPPVAEADGVAPAGTQTQIPGLLSWPEVCAKLPNPANQHLKGADGPLRKVGDPTKRFGSYAYRSADDSGENGVWVGYEDPDTAAIKAEYVKREGLGGIAVVDLSFDDFRGGCTGHDKFPILRQVKSKL.

An N-terminal signal peptide occupies residues 1-21; it reads MKLYALFSLLVGSLAIGQISA. One can recognise a GH18 domain in the interval 25–442; sequence HHLLCYYDGN…PILRQVKSKL (418 aa). Cys29 and Cys56 are oxidised to a cystine. N-linked (GlcNAc...) asparagine glycosylation occurs at Asn224. Cys343 and Cys426 are disulfide-bonded.

This sequence belongs to the glycosyl hydrolase 18 family. IDGF subfamily. Post-translationally, glycosylated. Primarily expressed in yolk cells and fat body. In larvae, it is expressed in the imaginal ring, the salivary duct, large salivary gland cells and weakly expressed in imaginal disks. More strongly expressed than Idgf1 and Idgf3.

Its subcellular location is the secreted. Functionally, cooperates with insulin-like peptides to stimulate the proliferation, polarization and motility of imaginal disk cells. May act by stabilizing the binding of insulin-like peptides to its receptor through a simultaneous interaction with both molecules to form a multiprotein signaling complex. The chain is Chitinase-like protein Idgf4 (Idgf4) from Drosophila melanogaster (Fruit fly).